The primary structure comprises 264 residues: Cancer/testis antigen 55 (264 aa).

The interval 242–264 (SSSGFQDDGGLGRPKRERRSQSI) is disordered. Residues 254–264 (RPKRERRSQSI) are compositionally biased toward basic residues.

In terms of assembly, interacts with GABARAP; this interaction may be important for GABARAP protein stability. Isoform 1 interacts with LAMP2; this interaction may be important for LAMP2 protein stability. In terms of tissue distribution, testis-specific. Expressed in spermatozoa (at protein level).

It is found in the cytoplasm. The protein resides in the cytoplasmic vesicle. It localises to the secretory vesicle. The protein localises to the acrosome. Its subcellular location is the cell projection. It is found in the cilium. The protein resides in the flagellum. In terms of biological role, plays a role in spermatogenesis, possibly acting in the regulation of the autophagy pathway. This Homo sapiens (Human) protein is Cancer/testis antigen 55 (CT55).